The chain runs to 187 residues: Large ribosomal subunit protein uL10 (187 aa).

The protein belongs to the universal ribosomal protein uL10 family. In terms of assembly, part of the ribosomal stalk of the 50S ribosomal subunit. The N-terminus interacts with L11 and the large rRNA to form the base of the stalk. The C-terminus forms an elongated spine to which L12 dimers bind in a sequential fashion forming a multimeric L10(L12)X complex.

Its function is as follows. Forms part of the ribosomal stalk, playing a central role in the interaction of the ribosome with GTP-bound translation factors. The chain is Large ribosomal subunit protein uL10 from Synechococcus sp. (strain JA-3-3Ab) (Cyanobacteria bacterium Yellowstone A-Prime).